The primary structure comprises 232 residues: Mediator of RNA polymerase II transcription subunit 18 (232 aa).

The protein belongs to the Mediator complex subunit 18 family. As to quaternary structure, component of the Mediator complex.

The protein resides in the nucleus. Its function is as follows. Component of the Mediator complex, a coactivator involved in the regulated transcription of nearly all RNA polymerase II-dependent genes. Mediator functions as a bridge to convey information from gene-specific regulatory proteins to the basal RNA polymerase II transcription machinery. Mediator is recruited to promoters by direct interactions with regulatory proteins and serves as a scaffold for the assembly of a functional preinitiation complex with RNA polymerase II and the general transcription factors. The polypeptide is Mediator of RNA polymerase II transcription subunit 18 (mdt-18) (Caenorhabditis elegans).